The following is a 374-amino-acid chain: Protein Brevis radix-like 2 (374 aa).

Disordered regions lie at residues asparagine 12–leucine 43 and alanine 57–aspartate 80. Polar residues predominate over residues serine 65–aspartate 80. Residues lysine 143–asparagine 198 form the BRX 1 domain. Residues glutamine 205–aspartate 316 are disordered. Polar residues-rich tracts occupy residues serine 246–glutamine 259 and glycine 267–aspartate 288. Residues glutamate 289–glutamate 307 are compositionally biased toward basic and acidic residues. Residues threonine 319 to leucine 374 form the BRX 2 domain.

Belongs to the BRX family. As to expression, expressed in roots.

It localises to the nucleus. This is Protein Brevis radix-like 2 (BRXL2) from Arabidopsis thaliana (Mouse-ear cress).